Here is a 360-residue protein sequence, read N- to C-terminus: Photosystem II protein D1 (360 aa).

A run of 3 helical transmembrane segments spans residues 29–46 (YIGWFGCLMFPTLLTATS), 118–133 (HFLLGVASYMGREWEL), and 142–156 (WIFVAFSAPVAAASA). Position 118 (histidine 118) interacts with chlorophyll a. Residue tyrosine 126 participates in pheophytin a binding. [CaMn4O5] cluster is bound by residues aspartate 170 and glutamate 189. Residues 197–218 (FHMAGVAGVFGGSLFSAMHGSL) form a helical membrane-spanning segment. Histidine 198 lines the chlorophyll a pocket. A quinone-binding positions include histidine 215 and 264–265 (SF). Residue histidine 215 participates in Fe cation binding. Histidine 272 provides a ligand contact to Fe cation. A helical membrane pass occupies residues 274 to 288 (FLAAWPVVGIWLTAM). Positions 332, 333, 342, and 344 each coordinate [CaMn4O5] cluster. Residues 345-360 (SGDVLPVALNAPAVNG) constitute a propeptide that is removed on maturation.

This sequence belongs to the reaction center PufL/M/PsbA/D family. PSII is composed of 1 copy each of membrane proteins PsbA, PsbB, PsbC, PsbD, PsbE, PsbF, PsbH, PsbI, PsbJ, PsbK, PsbL, PsbM, PsbT, PsbX, PsbY, PsbZ, Psb30/Ycf12, at least 3 peripheral proteins of the oxygen-evolving complex and a large number of cofactors. It forms dimeric complexes. It depends on The D1/D2 heterodimer binds P680, chlorophylls that are the primary electron donor of PSII, and subsequent electron acceptors. It shares a non-heme iron and each subunit binds pheophytin, quinone, additional chlorophylls, carotenoids and lipids. D1 provides most of the ligands for the Mn4-Ca-O5 cluster of the oxygen-evolving complex (OEC). There is also a Cl(-1) ion associated with D1 and D2, which is required for oxygen evolution. The PSII complex binds additional chlorophylls, carotenoids and specific lipids. as a cofactor. Tyr-161 forms a radical intermediate that is referred to as redox-active TyrZ, YZ or Y-Z. In terms of processing, C-terminally processed by CTPA; processing is essential to allow assembly of the oxygen-evolving complex and thus photosynthetic growth.

The protein localises to the plastid. The protein resides in the chloroplast thylakoid membrane. The catalysed reaction is 2 a plastoquinone + 4 hnu + 2 H2O = 2 a plastoquinol + O2. Photosystem II (PSII) is a light-driven water:plastoquinone oxidoreductase that uses light energy to abstract electrons from H(2)O, generating O(2) and a proton gradient subsequently used for ATP formation. It consists of a core antenna complex that captures photons, and an electron transfer chain that converts photonic excitation into a charge separation. The D1/D2 (PsbA/PsbD) reaction center heterodimer binds P680, the primary electron donor of PSII as well as several subsequent electron acceptors. This is Photosystem II protein D1 from Trieres chinensis (Marine centric diatom).